The sequence spans 170 residues: Photosystem I assembly protein Ycf3 (170 aa).

TPR repeat units follow at residues 35–68 (AFTY…EVDA), 72–105 (SYIL…NPSL), and 120–153 (GEQA…APTN).

It belongs to the Ycf3 family.

The protein localises to the plastid. It is found in the chloroplast thylakoid membrane. Its function is as follows. Essential for the assembly of the photosystem I (PSI) complex. May act as a chaperone-like factor to guide the assembly of the PSI subunits. This chain is Photosystem I assembly protein Ycf3, found in Tetradesmus obliquus (Green alga).